A 452-amino-acid polypeptide reads, in one-letter code: Eukaryotic translation initiation factor 4B3 (452 aa).

An N-acetylalanine modification is found at alanine 2. Residues 20–282 (EEHEAELKQQ…PSGGSRPRLV (263 aa)) form a disordered region. Residues 28 to 37 (QQPSPTNQKS) are compositionally biased toward polar residues. Basic and acidic residues predominate over residues 98–110 (PRERSAEELDRSK). Over residues 111-122 (LGGGFRSYGGGR) the composition is skewed to gly residues. The segment covering 126 to 136 (ESSSSRWGSSR) has biased composition (low complexity). Residues 137 to 156 (VSEDGERRGGGFNRDREPSR) show a composition bias toward basic and acidic residues. Short sequence motifs (nuclear localization signal) lie at residues 172-179 (AKKPISGN) and 215-222 (PRRFVSSN). The span at 227-243 (DRFEKRGSFESLSRNRD) shows a compositional bias: basic and acidic residues. Serine 234, serine 270, and serine 300 each carry phosphoserine. Positions 265–280 (GAANGSPPPSGGSRPR) are enriched in low complexity. Positions 349 to 452 (AAMEKPNEKS…AKKEETEDKI (104 aa)) are disordered. Over residues 369–386 (GRKDEERIERSWRKSTEH) the composition is skewed to basic and acidic residues. Over residues 387–397 (SEEDAQEEEPA) the composition is skewed to acidic residues. Basic and acidic residues-rich tracts occupy residues 400 to 419 (GAKK…KKEE) and 441 to 452 (EEAKKEETEDKI).

This sequence belongs to the eIF-4 subunit B family. Homodimer. Nonspherical monomer. mRNA-discriminating component of initiation complexes. Interacts with MAD2. Phosphorylated.

Its subcellular location is the nucleus. Promotes the eIF4F and eIF4A RNA-dependent ATP-hydrolysis activity with different efficiency depending on mRNAs, thus providing mRNA discrimination during initiation of translation. The sequence is that of Eukaryotic translation initiation factor 4B3 from Arabidopsis thaliana (Mouse-ear cress).